A 206-amino-acid polypeptide reads, in one-letter code: Ras-related protein Ral-A (206 aa).

GTP-binding positions include 24–29, 40–46, and 127–130; these read GVGKSA, VEDYEPT, and NKSD. The Effector region motif lies at 43-51; the sequence is YEPTKADSY. Thr-46 carries a (Microbial infection) O-linked (Glc) threonine; by P.sordellii toxin TcsL glycan. Ser-194 is modified (phosphoserine; by AURKA). At Cys-203 the chain carries Cysteine methyl ester. The S-geranylgeranyl cysteine moiety is linked to residue Cys-203. Positions 204-206 are cleaved as a propeptide — removed in mature form; sequence CIL.

Belongs to the small GTPase superfamily. Ras family. As to quaternary structure, interacts (via effector domain) with RALBP1; during mitosis, recruits RALBP1 to the mitochondrion where it promotes DNM1L phosphorylation and mitochondrial fission. Interacts with EXOC2/Sec5 and EXOC8/Exo84; binding to EXOC2 and EXOC8 is mutually exclusive. Interacts with Clostridium exoenzyme C3. Interacts with RALGPS1. Interacts with LPAR1 and LPAR2. Interacts with GRK2 in response to LPAR1 activation. RALA and GRK2 binding to LPAR1 is mutually exclusive. Interacts with CDC42. Phosphorylated. Phosphorylation at Ser-194 by AURKA/Aurora kinase A, during mitosis, induces RALA localization to the mitochondrion where it regulates mitochondrial fission. In terms of processing, prenylation is essential for membrane localization. The geranylgeranylated form and the farnesylated mutant do not undergo alternative prenylation in response to geranylgeranyltransferase I inhibitors (GGTIs) and farnesyltransferase I inhibitors (FTIs). Post-translationally, (Microbial infection) Glucosylated at Thr-46 by P.sordellii toxin TcsL from strain 6018. Monoglucosylation completely prevents the recognition of the downstream effector, blocking the GTPases in their inactive form. Not glucosylated by TcsL from strain VPI 9048.

It localises to the cell membrane. The protein localises to the cleavage furrow. The protein resides in the midbody. Its subcellular location is the midbody ring. It is found in the mitochondrion. It catalyses the reaction GTP + H2O = GDP + phosphate + H(+). Its activity is regulated as follows. Alternates between an inactive form bound to GDP and an active form bound to GTP. Activated by a guanine nucleotide-exchange factor (GEF) and inactivated by a GTPase-activating protein (GAP). Its function is as follows. Multifunctional GTPase involved in a variety of cellular processes including gene expression, cell migration, cell proliferation, oncogenic transformation and membrane trafficking. Accomplishes its multiple functions by interacting with distinct downstream effectors. Acts as a GTP sensor for GTP-dependent exocytosis of dense core vesicles. The RALA-exocyst complex regulates integrin-dependent membrane raft exocytosis and growth signaling. Key regulator of LPAR1 signaling and competes with GRK2 for binding to LPAR1 thus affecting the signaling properties of the receptor. Required for anchorage-independent proliferation of transformed cells. During mitosis, supports the stabilization and elongation of the intracellular bridge between dividing cells. Cooperates with EXOC2 to recruit other components of the exocyst to the early midbody. During mitosis, also controls mitochondrial fission by recruiting to the mitochondrion RALBP1, which mediates the phosphorylation and activation of DNM1L by the mitotic kinase cyclin B-CDK1. The polypeptide is Ras-related protein Ral-A (RALA) (Homo sapiens (Human)).